The sequence spans 664 residues: Methionine--tRNA ligase (664 aa).

Residues 13–23 carry the 'HIGH' region motif; it reads PYTNGPCHLGH. Residues Cys144, Cys147, Cys156, and Cys160 each coordinate Zn(2+). The short motif at 327–331 is the 'KMSKS' region element; it reads KFSKS. Lys330 provides a ligand contact to ATP. A tRNA-binding domain is found at 566 to 664; the sequence is EFAKVEMKTG…TPVPSGTKIR (99 aa).

It belongs to the class-I aminoacyl-tRNA synthetase family. MetG type 1 subfamily. In terms of assembly, homodimer. Zn(2+) is required as a cofactor.

It localises to the cytoplasm. The enzyme catalyses tRNA(Met) + L-methionine + ATP = L-methionyl-tRNA(Met) + AMP + diphosphate. Functionally, is required not only for elongation of protein synthesis but also for the initiation of all mRNA translation through initiator tRNA(fMet) aminoacylation. In Methanospirillum hungatei JF-1 (strain ATCC 27890 / DSM 864 / NBRC 100397 / JF-1), this protein is Methionine--tRNA ligase.